A 90-amino-acid chain; its full sequence is Auxin-responsive protein SAUR22 (90 aa).

Belongs to the ARG7 family.

Its subcellular location is the cell membrane. Functions as a positive effector of cell expansion through modulation of auxin transport. The chain is Auxin-responsive protein SAUR22 from Arabidopsis thaliana (Mouse-ear cress).